Reading from the N-terminus, the 438-residue chain is MITMKNILKLRATGLLLLLLLMISVLGNGIGQAMAADRVYLDITAPETRKIKVAVPWFTNTGEGGMKARIAKDIADTVAKALKFHGIISIIPTSEYKGRQTADWAKLGADYAVLGSYKMFPKKIKLEIRLLDVAENNIILGKSYKGSMSQQNPMIFKFCDAAIKSLTGTEGIASSRIAFVSYEKRTKDVFMTDILGRRIRQVTRHNNLVVSPRFTRDGNFLSYSSYHSGSQKLYITDLRQAKITKSLSRRKGMNLAPTWAPDGKSCILTLSKYGAPDLFRINQQGKILEQLTSRAGVNVSPTYSADGRHIVFVSDRSGRPQLYLMELETKQTKRLTYDGRENAEPNWSPVENKIAYSSLRDGLYQIFTLDPFSAAPPKQLTSDLTRHESPVWSPDGNQILFTQYDGRRQQIYAIMKNGSYQRRVFSFPGSQSSARWAR.

An N-terminal signal peptide occupies residues 1 to 35; the sequence is MITMKNILKLRATGLLLLLLLMISVLGNGIGQAMA.

This sequence belongs to the TolB family. The Tol-Pal system is composed of five core proteins: the inner membrane proteins TolA, TolQ and TolR, the periplasmic protein TolB and the outer membrane protein Pal. They form a network linking the inner and outer membranes and the peptidoglycan layer.

The protein resides in the periplasm. Part of the Tol-Pal system, which plays a role in outer membrane invagination during cell division and is important for maintaining outer membrane integrity. This Desulfotalea psychrophila (strain LSv54 / DSM 12343) protein is Tol-Pal system protein TolB.